The chain runs to 134 residues: Small ribosomal subunit protein uS11 (134 aa).

2 disordered regions span residues 1-22 and 114-134; these read MPPK…KNVA and SIQD…RRRV. Over residues 9 to 22 the composition is skewed to basic residues; that stretch reads AAKKVRRKEKKNVA.

This sequence belongs to the universal ribosomal protein uS11 family. In terms of assembly, part of the 30S ribosomal subunit. Interacts with proteins S7 and S18. Binds to IF-3.

Located on the platform of the 30S subunit, it bridges several disparate RNA helices of the 16S rRNA. Forms part of the Shine-Dalgarno cleft in the 70S ribosome. This chain is Small ribosomal subunit protein uS11, found in Streptomyces coelicolor (strain ATCC BAA-471 / A3(2) / M145).